A 139-amino-acid chain; its full sequence is Large ribosomal subunit protein uL16 (139 aa).

Belongs to the universal ribosomal protein uL16 family. In terms of assembly, part of the 50S ribosomal subunit.

Binds 23S rRNA and is also seen to make contacts with the A and possibly P site tRNAs. In Synechocystis sp. (strain ATCC 27184 / PCC 6803 / Kazusa), this protein is Large ribosomal subunit protein uL16.